Reading from the N-terminus, the 711-residue chain is Ribosomal RNA large subunit methyltransferase K/L (711 aa).

The THUMP domain maps to Leu43–Phe154.

The protein belongs to the methyltransferase superfamily. RlmKL family.

The protein localises to the cytoplasm. The catalysed reaction is guanosine(2445) in 23S rRNA + S-adenosyl-L-methionine = N(2)-methylguanosine(2445) in 23S rRNA + S-adenosyl-L-homocysteine + H(+). It carries out the reaction guanosine(2069) in 23S rRNA + S-adenosyl-L-methionine = N(2)-methylguanosine(2069) in 23S rRNA + S-adenosyl-L-homocysteine + H(+). Its function is as follows. Specifically methylates the guanine in position 2445 (m2G2445) and the guanine in position 2069 (m7G2069) of 23S rRNA. This is Ribosomal RNA large subunit methyltransferase K/L from Shewanella sediminis (strain HAW-EB3).